A 663-amino-acid polypeptide reads, in one-letter code: Drug sensory protein A (663 aa).

3 consecutive transmembrane segments (helical) span residues 32 to 52 (LMAAATLVVSLLMSGLTFWAV), 165 to 185 (VFIPLQYQGKFLGVLAIGINP), and 199 to 219 (VTIAVFISIWVMVILGAVFNA). The region spanning 220 to 272 (LTITQPIKELLLGVKNIAAGNFKQRITLPFGGELGELIVNFNEMAERLERYEA) is the HAMP domain. A PAS domain is found at 281 to 351 (EKAKLDTLVS…QPLRELAADQ (71 aa)). Residues 429-656 (NVSHELRTPL…TFWFDLAVYQ (228 aa)) form the Histidine kinase domain. Position 432 is a phosphohistidine; by autocatalysis (H432).

Its subcellular location is the cell membrane. It carries out the reaction ATP + protein L-histidine = ADP + protein N-phospho-L-histidine.. The polypeptide is Drug sensory protein A (dspA) (Synechocystis sp. (strain ATCC 27184 / PCC 6803 / Kazusa)).